The following is a 361-amino-acid chain: Glyceraldehyde-3-phosphate dehydrogenase, glycosomal (361 aa).

NAD(+) is bound by residues 13–14 (RI), D39, and R93. Residues 166–168 (SCT), T198, 227–228 (TG), and R250 contribute to the D-glyceraldehyde 3-phosphate site. The Nucleophile role is filled by C167. Residue N336 participates in NAD(+) binding. The short motif at 359 to 361 (SKL) is the Microbody targeting signal element.

This sequence belongs to the glyceraldehyde-3-phosphate dehydrogenase family. In terms of assembly, homotetramer.

Its subcellular location is the glycosome. The catalysed reaction is D-glyceraldehyde 3-phosphate + phosphate + NAD(+) = (2R)-3-phospho-glyceroyl phosphate + NADH + H(+). Its pathway is carbohydrate degradation; glycolysis; pyruvate from D-glyceraldehyde 3-phosphate: step 1/5. The chain is Glyceraldehyde-3-phosphate dehydrogenase, glycosomal (GAPDG) from Crithidia fasciculata.